Reading from the N-terminus, the 104-residue chain is Late embryogenis abundant protein 41 (104 aa).

A mitochondrion-targeting transit peptide spans 1 to 31 (MAARSLSGAVKSLCSAASGSLSCSIVLRRSY).

This sequence belongs to the LEA type 3 family.

Its subcellular location is the mitochondrion. The polypeptide is Late embryogenis abundant protein 41 (Arabidopsis thaliana (Mouse-ear cress)).